We begin with the raw amino-acid sequence, 181 residues long: Large ribosomal subunit protein uL30 (181 aa).

The protein belongs to the universal ribosomal protein uL30 family. As to quaternary structure, part of the 50S ribosomal subunit.

The protein is Large ribosomal subunit protein uL30 of Hyperthermus butylicus (strain DSM 5456 / JCM 9403 / PLM1-5).